Here is a 349-residue protein sequence, read N- to C-terminus: MTEFDNLTWLHGKPQGSGLLKANPEDFVVVEDLGFTPDGEGEHILLRILKNGCNTRFVADALAKFLKIHAREVSFAGQKDKHAVTEQWLCARVPGKEMPDFSAFQLEGCKVLEYARHKRKLRLGALKGNAFTLVLREISDRRDVETRLQAIRDGGVPNYFGAQRFGIGGSNLQGALHWAQSNAPVRDRNKRSFWLSAARSALFNQIVHQRLKKPDFNQVVDGDALQLAGRGSWFVATSEELPELQRRVDEKELMITASLPGSGEWGTQRAALAFEQDAIAQETVLQSLLLREKVEASRRAMLLYPQQLSWNWWDDVTVELRFWLPAGSFATSVVRELINTMGDYAHIAE.

Residue F27 participates in substrate binding. D80 functions as the Nucleophile in the catalytic mechanism. Substrate is bound at residue N129. Positions G155 to L303 constitute a TRUD domain. Residue F329 coordinates substrate.

This sequence belongs to the pseudouridine synthase TruD family.

It catalyses the reaction uridine(13) in tRNA = pseudouridine(13) in tRNA. Functionally, responsible for synthesis of pseudouridine from uracil-13 in transfer RNAs. This is tRNA pseudouridine synthase D from Salmonella newport (strain SL254).